Consider the following 571-residue polypeptide: MRVSKYLLSTQKETPANAEVISHQLMLRAGMIRRNASGLYSYLPTGLRVLRKVEAIVREEMNKAGAIEILMPMVQPADLWVETGRWDKFGPELLRFKDRHNRDFVLGPTHEEVITDLIRKEVSSYKQLPLNLYQIQTKFRDEVRPRFGMMRSREFLMKDAYSFHLDVDTMNETYEAMYTAYSNILSRMGLAFRPVLADTGSIGGSMSHEFHVLAQSGEDLIAYSTGSDYAANIEKAESPMPTEPRGAATEALRLVDTPNAKTIAELVEQFGLDITKTVKTLIVKGATEAAPLVALIVRGDHELNEVKADKLDLVASPLEMAPEALIRDAIGAGPGSLGPVGLNMPIIIDHSVSVMSDFAAGANVDDKHYFGINWERDLPLAQAADIRNVVEGEPTPDGLGTYAMARGIEVGHIFQLGTNYSKSMNATVLDENGKSQVLLMGCYGVGVSRIVAAAIEQNFDDRGIVWPEAIAPFSVGILPMNMHKSHRVTDIAEQLYKDLSAAGIEVLLDDRKERPGVMFADMELIGIPHTVVIGDRNIDAGVFEYKNRRTGEKQDIPFDQLVDFLKNAVKS.

This sequence belongs to the class-II aminoacyl-tRNA synthetase family. ProS type 1 subfamily. In terms of assembly, homodimer.

It localises to the cytoplasm. It catalyses the reaction tRNA(Pro) + L-proline + ATP = L-prolyl-tRNA(Pro) + AMP + diphosphate. Catalyzes the attachment of proline to tRNA(Pro) in a two-step reaction: proline is first activated by ATP to form Pro-AMP and then transferred to the acceptor end of tRNA(Pro). As ProRS can inadvertently accommodate and process non-cognate amino acids such as alanine and cysteine, to avoid such errors it has two additional distinct editing activities against alanine. One activity is designated as 'pretransfer' editing and involves the tRNA(Pro)-independent hydrolysis of activated Ala-AMP. The other activity is designated 'posttransfer' editing and involves deacylation of mischarged Ala-tRNA(Pro). The misacylated Cys-tRNA(Pro) is not edited by ProRS. The sequence is that of Proline--tRNA ligase from Shewanella putrefaciens (strain CN-32 / ATCC BAA-453).